A 268-amino-acid chain; its full sequence is 4-hydroxy-tetrahydrodipicolinate reductase (268 aa).

NAD(+)-binding positions include 10 to 15 (GASGRM) and Asp-36. Residue Arg-37 coordinates NADP(+). NAD(+) contacts are provided by residues 99–101 (GTT) and 123–126 (SANM). His-156 acts as the Proton donor/acceptor in catalysis. A (S)-2,3,4,5-tetrahydrodipicolinate-binding site is contributed by His-157. Residue Lys-160 is the Proton donor of the active site. Residue 166-167 (GT) participates in (S)-2,3,4,5-tetrahydrodipicolinate binding.

Belongs to the DapB family.

The protein resides in the cytoplasm. It catalyses the reaction (S)-2,3,4,5-tetrahydrodipicolinate + NAD(+) + H2O = (2S,4S)-4-hydroxy-2,3,4,5-tetrahydrodipicolinate + NADH + H(+). It carries out the reaction (S)-2,3,4,5-tetrahydrodipicolinate + NADP(+) + H2O = (2S,4S)-4-hydroxy-2,3,4,5-tetrahydrodipicolinate + NADPH + H(+). The protein operates within amino-acid biosynthesis; L-lysine biosynthesis via DAP pathway; (S)-tetrahydrodipicolinate from L-aspartate: step 4/4. Its function is as follows. Catalyzes the conversion of 4-hydroxy-tetrahydrodipicolinate (HTPA) to tetrahydrodipicolinate. This is 4-hydroxy-tetrahydrodipicolinate reductase from Burkholderia mallei (strain NCTC 10247).